Here is an 826-residue protein sequence, read N- to C-terminus: ATTTTTTHNSKNKQYLAKQKPVELTLGYQNPNGCKVCSFGSKGSIYQKVSSGFKGVSVMTDDKSTMPSVEEDFENIGILNVDSSLEPFKDHFKYRLKRYLHQKKLIEEYEGGLQEFAKGYLKFGFNREEDGISYREWAPAAQEAQIIGDFNGWNGSNLHMEKDQFGVWSIQIPDADGNPAIPHNSRVKFRFKHSDGVWVDRIPAWIKYATVDPTRFAAPYDGVYWDPPLSERYQFKHPRPPKPKAPRIYEAHVGMSSSEPRINSYREFADDVLPRIRENNYNTVQLMAVMEHSYYASFWYHVTKPFFAVSSRSGSPEDLKYLIDKAHSLGLNVLMDVIHSHASNNVTDGLNGFDVGQSSQQSYFHAGDRGYHKLWDSRLFNYANWKSSFLLSNLRWWLEEYKFDGFRFDGVTSMLYHHHGINMAFTGDYNEYFSEETDVDAVVYLMLANSLVHDILPDATDIAEDVSGMPGLGRPVSEVGIGFDYRLAMAIPDKWIDYLKNKKDSEWSMKEISLNLTNRRYTEKCVSYAESHDQSIVGDKTIAFLLMDEEMYSSMSCLTMLSPTIERGISLHKMIHFITLALGGEGYLNFMGNEFGHPEWIDFPREGNGWSYEKCRLTQWNLVDTNHLRYKFMNAFDRAMNLLDDKFSILASTKQIVSSTNNEDKVIVFERGDLVFVFNFHPENTYEGYKVGCDLPGKYRVALDSDATEFGGHGRVGHDADQFTSPEGIPGIPETNFNNRPNSFKVLSPPHTCVVYYRVDERQEESNNPNLGSVEETFAAADTDVARIPDVSMESEDSNLDRIEDNSEDAVDAGILKVEREVVGDN.

A chloroplast-targeting transit peptide spans 1-58 (ATTTTTTHNSKNKQYLAKQKPVELTLGYQNPNGCKVCSFGSKGSIYQKVSSGFKGVSV). The active-site Nucleophile is Asp409. The Proton donor role is filled by Glu464. The disordered stretch occupies residues 782 to 813 (DTDVARIPDVSMESEDSNLDRIEDNSEDAVDA).

Belongs to the glycosyl hydrolase 13 family. GlgB subfamily. As to quaternary structure, monomer. In terms of tissue distribution, expressed in roots, leaves, stipules, pods and flowers.

It is found in the plastid. It localises to the chloroplast. The protein resides in the amyloplast. It carries out the reaction Transfers a segment of a (1-&gt;4)-alpha-D-glucan chain to a primary hydroxy group in a similar glucan chain.. It functions in the pathway glycan biosynthesis; starch biosynthesis. Catalyzes the formation of the alpha-1,6-glucosidic linkages in starch by scission of a 1,4-alpha-linked oligosaccharide from growing alpha-1,4-glucan chains and the subsequent attachment of the oligosaccharide to the alpha-1,6 position. May preferentially transfer long chains during branching. This Pisum sativum (Garden pea) protein is 1,4-alpha-glucan-branching enzyme 1, chloroplastic/amyloplastic (SBEII).